Here is a 967-residue protein sequence, read N- to C-terminus: Sarcosine oxidase subunit alpha (967 aa).

Ala141, Asp160, Glu161, Arg162, Ser168, Val207, Ala420, and Thr427 together coordinate NAD(+). Residues Thr694 and Glu786 each coordinate (6R)-5,10-methylene-5,6,7,8-tetrahydrofolate.

Belongs to the GcvT family. As to quaternary structure, heterotetramer composed of subunits alpha (SoxA), beta (SoxB), gamma (SoxG) and delta (SoxD). The cofactor is NAD(+).

The protein localises to the cytoplasm. The enzyme catalyses sarcosine + (6S)-5,6,7,8-tetrahydrofolate + O2 = (6R)-5,10-methylene-5,6,7,8-tetrahydrofolate + glycine + H2O2. It carries out the reaction sarcosine + O2 + H2O = formaldehyde + glycine + H2O2. In terms of biological role, in the presence of tetrahydrofolate, catalyzes the oxidative demethylation of sarcosine to yield glycine, 5,10-methylenetetrahydrofolate and hydrogen peroxide. In the absence of tetrahydrofolate, catalyzes the oxidative demethylation of sarcosine to yield glycine, formaldehyde and hydrogen peroxide. The chain is Sarcosine oxidase subunit alpha from Corynebacterium sp. (strain P-1).